A 349-amino-acid chain; its full sequence is Anthranilate phosphoribosyltransferase (349 aa).

5-phospho-alpha-D-ribose 1-diphosphate is bound by residues glycine 82, 85 to 86 (GD), 92 to 95 (NVST), 110 to 118 (KHGNRGVSS), and serine 122. Glycine 82 provides a ligand contact to anthranilate. Serine 94 contributes to the Mg(2+) binding site. Residue asparagine 113 participates in anthranilate binding. Arginine 168 lines the anthranilate pocket. Aspartate 227 and glutamate 228 together coordinate Mg(2+).

This sequence belongs to the anthranilate phosphoribosyltransferase family. As to quaternary structure, homodimer. It depends on Mg(2+) as a cofactor.

The enzyme catalyses N-(5-phospho-beta-D-ribosyl)anthranilate + diphosphate = 5-phospho-alpha-D-ribose 1-diphosphate + anthranilate. It functions in the pathway amino-acid biosynthesis; L-tryptophan biosynthesis; L-tryptophan from chorismate: step 2/5. Functionally, catalyzes the transfer of the phosphoribosyl group of 5-phosphorylribose-1-pyrophosphate (PRPP) to anthranilate to yield N-(5'-phosphoribosyl)-anthranilate (PRA). The protein is Anthranilate phosphoribosyltransferase of Acinetobacter baylyi (strain ATCC 33305 / BD413 / ADP1).